The sequence spans 580 residues: Proline--tRNA ligase (580 aa).

The protein belongs to the class-II aminoacyl-tRNA synthetase family. ProS type 1 subfamily. In terms of assembly, homodimer.

It localises to the cytoplasm. The enzyme catalyses tRNA(Pro) + L-proline + ATP = L-prolyl-tRNA(Pro) + AMP + diphosphate. In terms of biological role, catalyzes the attachment of proline to tRNA(Pro) in a two-step reaction: proline is first activated by ATP to form Pro-AMP and then transferred to the acceptor end of tRNA(Pro). As ProRS can inadvertently accommodate and process non-cognate amino acids such as alanine and cysteine, to avoid such errors it has two additional distinct editing activities against alanine. One activity is designated as 'pretransfer' editing and involves the tRNA(Pro)-independent hydrolysis of activated Ala-AMP. The other activity is designated 'posttransfer' editing and involves deacylation of mischarged Ala-tRNA(Pro). The misacylated Cys-tRNA(Pro) is not edited by ProRS. The sequence is that of Proline--tRNA ligase from Mycobacteroides abscessus (strain ATCC 19977 / DSM 44196 / CCUG 20993 / CIP 104536 / JCM 13569 / NCTC 13031 / TMC 1543 / L948) (Mycobacterium abscessus).